The primary structure comprises 336 residues: Fructose-1,6-bisphosphatase class 1 (336 aa).

Positions 90, 112, 114, and 115 each coordinate Mg(2+). Residues 115 to 118 (DGSS), N211, and K277 each bind substrate. E283 is a binding site for Mg(2+).

It belongs to the FBPase class 1 family. As to quaternary structure, homotetramer. Mg(2+) is required as a cofactor.

It is found in the cytoplasm. It carries out the reaction beta-D-fructose 1,6-bisphosphate + H2O = beta-D-fructose 6-phosphate + phosphate. It participates in carbohydrate biosynthesis; gluconeogenesis. This Pseudomonas fluorescens (strain Pf0-1) protein is Fructose-1,6-bisphosphatase class 1.